We begin with the raw amino-acid sequence, 89 residues long: Neuropeptide S (89 aa).

An N-terminal signal peptide occupies residues 1 to 23; it reads MIGSLKFNFILFLLISTMHMFWC. The propeptide occupies 24–67; it reads HPISSSKVPGKSDYFVILLNSCPTRMDRRVGLDFLKPILEKTLM.

The protein localises to the secreted. Functionally, modulates arousal and anxiety. May play an important anorexigenic role. Binds to its receptor NPSR1 with nanomolar affinity to increase intracellular calcium concentrations. The protein is Neuropeptide S (NPS) of Bos taurus (Bovine).